A 32-amino-acid chain; its full sequence is Ranatuerin-3 (32 aa).

A disulfide bond links C23 and C28.

This sequence belongs to the frog skin active peptide (FSAP) family. Ranatuerin subfamily. Expressed by the skin glands.

Its subcellular location is the secreted. Functionally, antibacterial activity against Gram-positive bacterium S.aureus (MIC=60 uM). Shows no detectable hemolytic activity towards human erythrocytes. In Aquarana catesbeiana (American bullfrog), this protein is Ranatuerin-3.